Reading from the N-terminus, the 157-residue chain is Crossover junction endodeoxyribonuclease RuvC (157 aa).

Residues Asp7, Glu67, and Asp140 contribute to the active site. The Mg(2+) site is built by Asp7, Glu67, and Asp140.

It belongs to the RuvC family. Homodimer which binds Holliday junction (HJ) DNA. The HJ becomes 2-fold symmetrical on binding to RuvC with unstacked arms; it has a different conformation from HJ DNA in complex with RuvA. In the full resolvosome a probable DNA-RuvA(4)-RuvB(12)-RuvC(2) complex forms which resolves the HJ. Mg(2+) is required as a cofactor.

It is found in the cytoplasm. It carries out the reaction Endonucleolytic cleavage at a junction such as a reciprocal single-stranded crossover between two homologous DNA duplexes (Holliday junction).. The RuvA-RuvB-RuvC complex processes Holliday junction (HJ) DNA during genetic recombination and DNA repair. Endonuclease that resolves HJ intermediates. Cleaves cruciform DNA by making single-stranded nicks across the HJ at symmetrical positions within the homologous arms, yielding a 5'-phosphate and a 3'-hydroxyl group; requires a central core of homology in the junction. The consensus cleavage sequence is 5'-(A/T)TT(C/G)-3'. Cleavage occurs on the 3'-side of the TT dinucleotide at the point of strand exchange. HJ branch migration catalyzed by RuvA-RuvB allows RuvC to scan DNA until it finds its consensus sequence, where it cleaves and resolves the cruciform DNA. The sequence is that of Crossover junction endodeoxyribonuclease RuvC from Rickettsia akari (strain Hartford).